The primary structure comprises 248 residues: Deoxyribose-phosphate aldolase (248 aa).

Catalysis depends on Asp117, which acts as the Proton donor/acceptor. The active-site Schiff-base intermediate with acetaldehyde is the Lys179. Lys208 functions as the Proton donor/acceptor in the catalytic mechanism.

Belongs to the DeoC/FbaB aldolase family. DeoC type 1 subfamily.

It is found in the cytoplasm. It carries out the reaction 2-deoxy-D-ribose 5-phosphate = D-glyceraldehyde 3-phosphate + acetaldehyde. Its pathway is carbohydrate degradation; 2-deoxy-D-ribose 1-phosphate degradation; D-glyceraldehyde 3-phosphate and acetaldehyde from 2-deoxy-alpha-D-ribose 1-phosphate: step 2/2. In terms of biological role, catalyzes a reversible aldol reaction between acetaldehyde and D-glyceraldehyde 3-phosphate to generate 2-deoxy-D-ribose 5-phosphate. The chain is Deoxyribose-phosphate aldolase from Thermotoga petrophila (strain ATCC BAA-488 / DSM 13995 / JCM 10881 / RKU-1).